Here is a 225-residue protein sequence, read N- to C-terminus: Recoverin family protein DDB_G0274781 (225 aa).

The segment covering 1-13 (MGNKQGKSPNNSK) has biased composition (low complexity). The disordered stretch occupies residues 1-20 (MGNKQGKSPNNSKGGKKYKI). A lipid anchor (N-myristoyl glycine) is attached at Gly-2. EF-hand domains are found at residues 78-113 (DNSP…LCKG), 114-149 (TAEE…AWIS), and 174-209 (MAQI…HPKI). 15 residues coordinate Ca(2+): Asp-91, Asn-93, Asp-95, Thr-97, Glu-102, Asp-127, Asp-129, Asn-131, Tyr-133, Glu-138, Asp-187, Asn-189, Asp-191, Lys-193, and Glu-198.

This sequence belongs to the recoverin family.

The polypeptide is Recoverin family protein DDB_G0274781 (Dictyostelium discoideum (Social amoeba)).